Consider the following 243-residue polypeptide: Peptidase E (243 aa).

Residues serine 118, aspartate 133, and histidine 155 each act as charge relay system in the active site.

It belongs to the peptidase S51 family.

It is found in the cytoplasm. It catalyses the reaction Dipeptidase E catalyzes the hydrolysis of dipeptides Asp-|-Xaa. It does not act on peptides with N-terminal Glu, Asn or Gln, nor does it cleave isoaspartyl peptides.. In terms of biological role, hydrolyzes dipeptides containing N-terminal aspartate residues. May play a role in allowing the cell to use peptide aspartate to spare carbon otherwise required for the synthesis of the aspartate family of amino acids. This chain is Peptidase E, found in Streptomyces coelicolor (strain ATCC BAA-471 / A3(2) / M145).